Consider the following 112-residue polypeptide: MSDELQSRTCTPCRGDVPPMTKAEAKRQLAQTPAWTLSDDGRCIERSFTFDDFKDAMSFVAKLGELAETEGHHPDICFGWGWARVTWQTKKINGLHDNDFIMAAKTDGLAPT.

The interval 1 to 30 (MSDELQSRTCTPCRGDVPPMTKAEAKRQLA) is disordered.

This sequence belongs to the pterin-4-alpha-carbinolamine dehydratase family.

The catalysed reaction is (4aS,6R)-4a-hydroxy-L-erythro-5,6,7,8-tetrahydrobiopterin = (6R)-L-erythro-6,7-dihydrobiopterin + H2O. This Aromatoleum aromaticum (strain DSM 19018 / LMG 30748 / EbN1) (Azoarcus sp. (strain EbN1)) protein is Putative pterin-4-alpha-carbinolamine dehydratase.